The primary structure comprises 246 residues: Triosephosphate isomerase (246 aa).

A substrate-binding site is contributed by 9–11 (NWK). H99 serves as the catalytic Electrophile. E168 acts as the Proton acceptor in catalysis. Substrate contacts are provided by residues G174, S207, and 228–229 (GG).

The protein belongs to the triosephosphate isomerase family. As to quaternary structure, homodimer.

It is found in the cytoplasm. It carries out the reaction D-glyceraldehyde 3-phosphate = dihydroxyacetone phosphate. It functions in the pathway carbohydrate biosynthesis; gluconeogenesis. It participates in carbohydrate degradation; glycolysis; D-glyceraldehyde 3-phosphate from glycerone phosphate: step 1/1. Its function is as follows. Involved in the gluconeogenesis. Catalyzes stereospecifically the conversion of dihydroxyacetone phosphate (DHAP) to D-glyceraldehyde-3-phosphate (G3P). This chain is Triosephosphate isomerase, found in Prochlorococcus marinus (strain NATL2A).